The following is a 228-amino-acid chain: Ribulose-phosphate 3-epimerase (228 aa).

S9 is a binding site for substrate. Positions 34, 36, 68, and 177 each coordinate a divalent metal cation. D36 acts as the Proton acceptor in catalysis. Substrate is bound by residues H68, 177-179 (DGG), and 199-200 (GS). D177 acts as the Proton donor in catalysis.

Belongs to the ribulose-phosphate 3-epimerase family. It depends on a divalent metal cation as a cofactor.

The enzyme catalyses D-ribulose 5-phosphate = D-xylulose 5-phosphate. Its pathway is carbohydrate degradation. Catalyzes the reversible epimerization of D-ribulose 5-phosphate to D-xylulose 5-phosphate. This is Ribulose-phosphate 3-epimerase from Buchnera aphidicola subsp. Acyrthosiphon pisum (strain APS) (Acyrthosiphon pisum symbiotic bacterium).